The sequence spans 60 residues: Potassium channel toxin alpha-KTx 3.16 (60 aa).

An N-terminal signal peptide occupies residues methionine 1 to glycine 23. 3 cysteine pairs are disulfide-bonded: cysteine 30–cysteine 50, cysteine 36–cysteine 55, and cysteine 40–cysteine 57.

The protein belongs to the short scorpion toxin superfamily. Potassium channel inhibitor family. Alpha-KTx 03 subfamily. Expressed by the venom gland.

The protein resides in the secreted. Functionally, potassium channel inhibitor. The polypeptide is Potassium channel toxin alpha-KTx 3.16 (Mesobuthus gibbosus (Mediterranean checkered scorpion)).